The chain runs to 499 residues: MPSGVFQKRPKAAETISLFCMILIRLSRAADDSHETSTLLATITTITTEIIPMPDSGRSCFGWSSAPEAAGGNCSRSNRNGTLKCYGGMNNLAALNQSGKLSRVQPALEMLLCGWPKDGLNHFRDLQKLPRLRSLTIEYSGFTEFKFDFPEMLELHTINISWTNLSYISSRTFKRVHPLKVLDLRWNQLIQLDGPLLLPRNFEQLYLAGNPWNCTRNFKWLLLQPEKGRLVVDRDELICTDRKYKERQMLMVMHYKLELKRQCQSHEDLRNCTCLMHHILPKTHIPLYTVNCSHLQFHRLPDFLPDNTTTLVINDNMISDINPLRDNPHYRHVVDMQLENNQISNVDNLEDTYWLQNFRLLNLRGNNLRKLHVYALDNALDDNENANLLLLSRNPWHCTCKFGSRMRELLTKYKDIVRDAWNVSCTYRLDDDQLLAKVLTLSRQEMCNLSVEGGTQIHPIDWLNGVLASLIFLILGKLAYDYYYYKYYGRVPWIVMKMP.

An N-terminal signal peptide occupies residues 1–29; that stretch reads MPSGVFQKRPKAAETISLFCMILIRLSRA. 2 LRR repeats span residues 154-175 and 178-199; these read ELHTINISWTNLSYISSRTFKR and PLKVLDLRWNQLIQLDGPLLLP. In terms of domain architecture, LRRCT 1 spans 210 to 265; that stretch reads NPWNCTRNFKWLLLQPEKGRLVVDRDELICTDRKYKERQMLMVMHYKLELKRQCQS. 3 LRR repeats span residues 307–328, 332–353, and 357–378; these read NTTTLVINDNMISDINPLRDNP, HVVDMQLENNQISNVDNLEDTY, and NFRLLNLRGNNLRKLHVYALDN. In terms of domain architecture, LRRCT 2 spans 394 to 449; that stretch reads NPWHCTCKFGSRMRELLTKYKDIVRDAWNVSCTYRLDDDQLLAKVLTLSRQEMCNL.

Has a role in the ecdysone induced cascade; probably indirect control of 'late' ecdysone genes. The chain is Protein singed wings 2 from Drosophila melanogaster (Fruit fly).